Here is an 858-residue protein sequence, read N- to C-terminus: Protein translocase subunit SecA (858 aa).

Residues Gln-88, 106 to 110 (GEGKT), and Asp-494 contribute to the ATP site. The disordered stretch occupies residues 808–848 (KEDRGQLSYSGGGNAEDARNTPAKAAPRIGRNDPCPCGSGR). 4 residues coordinate Zn(2+): Cys-842, Cys-844, Cys-853, and Cys-854.

This sequence belongs to the SecA family. As to quaternary structure, monomer and homodimer. Part of the essential Sec protein translocation apparatus which comprises SecA, SecYEG and auxiliary proteins SecDF-YajC and YidC. Zn(2+) is required as a cofactor.

It is found in the cell inner membrane. It localises to the cytoplasm. It catalyses the reaction ATP + H2O + cellular proteinSide 1 = ADP + phosphate + cellular proteinSide 2.. Functionally, part of the Sec protein translocase complex. Interacts with the SecYEG preprotein conducting channel. Has a central role in coupling the hydrolysis of ATP to the transfer of proteins into and across the cell membrane, serving as an ATP-driven molecular motor driving the stepwise translocation of polypeptide chains across the membrane. In Desulfovibrio desulfuricans (strain ATCC 27774 / DSM 6949 / MB), this protein is Protein translocase subunit SecA.